The chain runs to 499 residues: Cytochrome P450 monooxygenase ausI (499 aa).

The chain crosses the membrane as a helical span at residues 10–30 (PLGQPLIAGFVVVSAVLYLLY). Cys-439 is a heme binding site. N-linked (GlcNAc...) asparagine glycosylation occurs at Asn-483.

The protein belongs to the cytochrome P450 family. Requires heme as cofactor.

It is found in the membrane. The protein operates within secondary metabolite biosynthesis; terpenoid biosynthesis. In terms of biological role, cytochrome P450 monooxygenase; part of the gene cluster B that mediates the biosynthesis of austinol and dehydroaustinol, two fungal meroterpenoids. The first step of the pathway is the synthesis of 3,5-dimethylorsellinic acid by the polyketide synthase ausA. 3,5-dimethylorsellinic acid is then prenylated by the polyprenyl transferase ausN. Further epoxidation by the FAD-dependent monooxygenase ausM and cyclization by the probable terpene cyclase ausL lead to the formation of protoaustinoid A. Protoaustinoid A is then oxidized to spiro-lactone preaustinoid A3 by the combined action of the FAD-binding monooxygenases ausB and ausC, and the dioxygenase ausE. Acid-catalyzed keto-rearrangement and ring contraction of the tetraketide portion of preaustinoid A3 by ausJ lead to the formation of preaustinoid A4. The aldo-keto reductase ausK, with the help of ausH, is involved in the next step by transforming preaustinoid A4 into isoaustinone which is in turn hydroxylated by the P450 monooxygenase ausI to form austinolide. Finally, the cytochrome P450 monooxygenase ausG modifies austinolide to austinol. Austinol can be further modified to dehydroaustinol which forms a diffusible complex with diorcinol that initiates conidiation. Due to genetic rearrangements of the clusters and the subsequent loss of some enzymes, the end products of the Emericella nidulans austinoid biosynthesis clusters are austinol and dehydroaustinol, even if additional enzymes, such as the O-acetyltransferase ausQ and the cytochrome P450 monooxygenase ausR are still functional. In Emericella nidulans (strain FGSC A4 / ATCC 38163 / CBS 112.46 / NRRL 194 / M139) (Aspergillus nidulans), this protein is Cytochrome P450 monooxygenase ausI.